Consider the following 1262-residue polypeptide: Ras-specific guanine nucleotide-releasing factor 1 (1262 aa).

The PH 1 domain occupies 22–130; the sequence is DGTRKGYLSK…WVAAIARASY (109 aa). Serine 71 is subject to Phosphoserine; by PLK2. Residues 208-233 form the IQ domain; it reads KKIKKVQSFLRGWLCRRKWKNIIQDY. The 187-residue stretch at 244 to 430 folds into the DH domain; that stretch reads KRNQVVFSML…EELSRIMHDE (187 aa). A PH 2 domain is found at 460–588; it reads TFVRQGSLMQ…WTSDIIQCVD (129 aa). Phosphoserine; by PLK2 is present on residues serine 581 and serine 617. The 115-residue stretch at 635–749 folds into the N-terminal Ras-GEF domain; it reads KVLQIRYASV…RRRKLSLNIP (115 aa). Residues 714–738 are disordered; sequence DAPKSPRASRKFSSPPPLAIGTSSP. Phosphoserine is present on serine 745. A Phosphoserine; by PLK2 modification is found at serine 766. The interval 800 to 854 is disordered; the sequence is EEIDVPATIPEKPGELSASRKHSSDVLKEESEDDQNHSDEDNTEVSPVKSPPTPK. The span at 821–839 shows a compositional bias: basic and acidic residues; the sequence is HSSDVLKEESEDDQNHSDE. Residues 1027–1259 enclose the Ras-GEF domain; it reads PALEIAEQLT…YESSLLIEPK (233 aa).

In terms of assembly, homooligomer and heterooligomer with RASGRF2. Interacts with USP8, thereby regulating its stability. In terms of processing, phosphorylated by PLK2, leading to ubiquitination and degradation by the proteasome. Post-translationally, ubiquitinated and degraded following phosphorylation by PLK2. Phosphorylated by SRC and LCK. Phosphorylation by LCK increases its capacity to stimulate the GDP/GTP exchange on Ras, whereas its phosphorylation by SRC seems not to have an effect on stimulation activity. As to expression, brain.

Promotes the exchange of Ras-bound GDP by GTP. The chain is Ras-specific guanine nucleotide-releasing factor 1 (Rasgrf1) from Mus musculus (Mouse).